Consider the following 952-residue polypeptide: Ubiquitin carboxyl-terminal hydrolase CYLD (952 aa).

The interaction with TRIP stretch occupies residues 106-589; that stretch reads CEERLSLFRN…LEIMIGKKKG (484 aa). 2 consecutive CAP-Gly domains span residues 153–198 and 253–286; these read LAER…VFVA and DVLP…VQLC. Residues 311 to 350 form a disordered region; it reads RRPPKLAFMSRGVGDKGSSSHNKPKVTGSTSDPGSRNRSE. Positions 327-346 are enriched in polar residues; it reads GSSSHNKPKVTGSTSDPGSR. Ser383 is subject to Phosphoserine. Residues 386-409 are disordered; sequence EMSSDFGHSSPPPQPPSMNSLSSE. An interaction with TRAF2 region spans residues 390–465; the sequence is DFGHSSPPPQ…LPISSGNAHG (76 aa). Phosphoserine is present on residues Ser414 and Ser418. The interaction with IKBKG/NEMO stretch occupies residues 466-680; it reads LEVGSLAEVK…FTSEEKDPEE (215 aa). In terms of domain architecture, CAP-Gly 3 spans 488–531; sequence GQPPGLSDVLAGLELEDECAGCTDGTFRGTRYFTCALKKALFVK. The USP domain occupies 588–946; sequence KGIQGHYNSC…DAYMCMYQSP (359 aa). The active-site Nucleophile is the Cys597. The B-box stretch occupies residues 777 to 829; that stretch reads LEDTPRQCRICGGLAMYECRECYDDPDISAGKIKQFCKTCSTQVHLHPRRLNH. Cys784, Cys787, Cys795, Cys798, Cys813, Cys816, His821, and His829 together coordinate Zn(2+). His867 serves as the catalytic Proton acceptor.

Belongs to the peptidase C19 family. In terms of assembly, interacts (via CAP-Gly domain) with IKBKG/NEMO (via proline-rich C-terminal region). Interacts with TRAF2 and TRIP. Interacts with PLK1, DVL1, DVL3, MAVS, TBK1, IKKE and RIGI. Interacts (via CAP-Gly domain) with microtubules. Interacts with HDAC6 and BCL3. Interacts with MAP3K7. Identified in a complex with TRAF6 and SQSTM1. Interacts with OPTN and SQSTM1. Interacts with CEP350. Interacts with RNF31; the interaction is indirect and is mediated via SPATA2. Interacts with SPATA2 (via the PUB domain); the interaction is direct and recruits CYLD to the LUBAC complex, thereby regulating TNF-alpha-induced necroptosis. In terms of processing, phosphorylated on several serine residues by IKKA and/or IKKB in response to immune stimuli. Phosphorylation requires IKBKG. Phosphorylation abolishes TRAF2 deubiquitination, interferes with the activation of Jun kinases, and strongly reduces CD40-dependent gene activation by NF-kappa-B. Post-translationally, ubiquitinated. Polyubiquitinated in hepatocytes treated with palmitic acid. Ubiquitination is mediated by E3 ligase TRIM47 and leads to proteasomal degradation.

The protein resides in the cytoplasm. It is found in the perinuclear region. It localises to the cytoskeleton. Its subcellular location is the cell membrane. The protein localises to the microtubule organizing center. The protein resides in the centrosome. It is found in the spindle. It localises to the cilium basal body. It catalyses the reaction Thiol-dependent hydrolysis of ester, thioester, amide, peptide and isopeptide bonds formed by the C-terminal Gly of ubiquitin (a 76-residue protein attached to proteins as an intracellular targeting signal).. Its function is as follows. Deubiquitinase that specifically cleaves 'Lys-63'- and linear 'Met-1'-linked polyubiquitin chains and is involved in NF-kappa-B activation and TNF-alpha-induced necroptosis. Negatively regulates NF-kappa-B activation by deubiquitinating upstream signaling factors. Contributes to the regulation of cell survival, proliferation and differentiation via its effects on NF-kappa-B activation. Negative regulator of Wnt signaling. Inhibits HDAC6 and thereby promotes acetylation of alpha-tubulin and stabilization of microtubules. Plays a role in the regulation of microtubule dynamics, and thereby contributes to the regulation of cell proliferation, cell polarization, cell migration, and angiogenesis. Required for normal cell cycle progress and normal cytokinesis. Inhibits nuclear translocation of NF-kappa-B. Plays a role in the regulation of inflammation and the innate immune response, via its effects on NF-kappa-B activation. Dispensable for the maturation of intrathymic natural killer cells, but required for the continued survival of immature natural killer cells. Negatively regulates TNFRSF11A signaling and osteoclastogenesis. Involved in the regulation of ciliogenesis, allowing ciliary basal bodies to migrate and dock to the plasma membrane; this process does not depend on NF-kappa-B activation. Ability to remove linear ('Met-1'-linked) polyubiquitin chains regulates innate immunity and TNF-alpha-induced necroptosis: recruited to the LUBAC complex via interaction with SPATA2 and restricts linear polyubiquitin formation on target proteins. Regulates innate immunity by restricting linear polyubiquitin formation on RIPK2 in response to NOD2 stimulation. Involved in TNF-alpha-induced necroptosis by removing linear ('Met-1'-linked) polyubiquitin chains from RIPK1, thereby regulating the kinase activity of RIPK1. Negatively regulates intestinal inflammation by removing 'Lys-63' linked polyubiquitin chain of NLRP6, thereby reducing the interaction between NLRP6 and PYCARD/ASC and formation of the NLRP6 inflammasome. Does not catalyze deubiquitination of heterotypic 'Lys-63'-/'Lys-48'-linked branched ubiquitin chains. Removes 'Lys-63' linked polyubiquitin chain of MAP3K7, which inhibits phosphorylation and blocks downstream activation of the JNK-p38 kinase cascades. Also removes 'Lys-63'-linked polyubiquitin chains of MAP3K1 and MA3P3K3, which inhibit their interaction with MAP2K1 and MAP2K2. The chain is Ubiquitin carboxyl-terminal hydrolase CYLD (Cyld) from Mus musculus (Mouse).